The sequence spans 493 residues: Dipeptide permease D (493 aa).

13 helical membrane-spanning segments follow: residues 14–34 (VVAL…LLIL), 49–69 (ELFS…GYLA), 91–111 (LVLG…AIIV), 138–158 (GGFS…PIAC), 167–187 (WAMG…IFLC), 212–232 (NWGW…VLFW), 235–255 (WSVY…AKIY), 267–287 (LGLI…AQQG), 312–332 (MFQS…AWLV), 344–364 (IWGK…ILTL), 379–399 (LMVL…PVAM), 413–433 (VLTG…AGVI), and 458–478 (VFEQ…LIWL).

The protein belongs to the major facilitator superfamily. Proton-dependent oligopeptide transporter (POT/PTR) (TC 2.A.17) family. DtpD subfamily.

The protein resides in the cell inner membrane. Probable proton-dependent permease that transports dipeptides. This is Dipeptide permease D from Salmonella choleraesuis (strain SC-B67).